Here is a 219-residue protein sequence, read N- to C-terminus: Oligoribonuclease (219 aa).

An Exonuclease domain is found at 30–193 (LVWLDMEMTG…ADIVESIEEL (164 aa)). Tyrosine 151 is an active-site residue.

This sequence belongs to the oligoribonuclease family.

Its subcellular location is the cytoplasm. Functionally, 3'-to-5' exoribonuclease specific for small oligoribonucleotides. In Ralstonia nicotianae (strain ATCC BAA-1114 / GMI1000) (Ralstonia solanacearum), this protein is Oligoribonuclease.